A 447-amino-acid polypeptide reads, in one-letter code: GTPase Der (447 aa).

EngA-type G domains follow at residues 3 to 167 (PVIA…ALPE) and 180 to 353 (IRLA…KSAN). Residues 9-16 (GRPNVGKS), 56-60 (DTGGF), 119-122 (NKAE), 186-193 (GRPNVGKS), 233-237 (DTAGL), and 298-301 (NKWD) each bind GTP. Residues 354 to 438 (RKMPTPVLTR…PLRIEMKTSS (85 aa)) form the KH-like domain.

The protein belongs to the TRAFAC class TrmE-Era-EngA-EngB-Septin-like GTPase superfamily. EngA (Der) GTPase family. Associates with the 50S ribosomal subunit.

In terms of biological role, GTPase that plays an essential role in the late steps of ribosome biogenesis. This chain is GTPase Der, found in Acidovorax ebreus (strain TPSY) (Diaphorobacter sp. (strain TPSY)).